The following is a 521-amino-acid chain: Cytochrome P450 monooxygenase bet2 (521 aa).

The helical transmembrane segment at 23 to 43 (SNWRFALFVAATLLTSYIVIV) threads the bilayer. N188 is a glycosylation site (N-linked (GlcNAc...) asparagine). C461 contacts heme.

Belongs to the cytochrome P450 family. It depends on heme as a cofactor.

Its subcellular location is the membrane. The enzyme catalyses dehydroprobetaenone I + NADPH + O2 + H(+) = epoxybetaenone + NADP(+) + H2O. It carries out the reaction dehydroprobetaenone I + 3 NADPH + 3 O2 + 3 H(+) = betaenone C + 3 NADP(+) + 3 H2O. It functions in the pathway mycotoxin biosynthesis. Cytochrome P450 monooxygenase; part of the gene cluster that mediates the biosynthesis of betaenones, phytotoxic polyketides involved in leaf spot disease in sugar beets. The first step of the pathway is the synthesis of dehydroprobetaenone I by the polyketide synthase bet1 and the enoyl reductase bet3 via condensation of one acetyl-CoA starter unit with 7 malonyl-CoA units and 5 methylations. The C-terminal reductase (R) domain of bet1 catalyzes the reductive release of the polyketide chain. Because bet1 lacks a designated enoylreductase (ER) domain, the required activity is provided the enoyl reductase bet3. The short-chain dehydrogenase/reductase bet4 then catalyzes reduction of dehydroprobetaenone I to probetaenone I. The cytochrome P450 monooxygenase bet2 catalyzes successive epoxidation, oxidation (resulting from epoxide opening) and hydroxylation to install a tertiary alcohol in the decaline ring to yield betaenone C from dehydroprobetaenone I and betaenone B from probetaenone I. The FAD-linked oxidoreductase (orf1) is probably responsible for the conversion of betaenone C to betaenone A via an intramolecular aldol reaction between C-1 and C-17 to form the bridged tricyclic system in betaenone A. The protein is Cytochrome P450 monooxygenase bet2 of Neocamarosporium betae (Beet black rot fungus).